Consider the following 179-residue polypeptide: ATP synthase subunit delta (179 aa).

It belongs to the ATPase delta chain family. As to quaternary structure, F-type ATPases have 2 components, F(1) - the catalytic core - and F(0) - the membrane proton channel. F(1) has five subunits: alpha(3), beta(3), gamma(1), delta(1), epsilon(1). F(0) has three main subunits: a(1), b(2) and c(10-14). The alpha and beta chains form an alternating ring which encloses part of the gamma chain. F(1) is attached to F(0) by a central stalk formed by the gamma and epsilon chains, while a peripheral stalk is formed by the delta and b chains.

It is found in the cell membrane. Functionally, f(1)F(0) ATP synthase produces ATP from ADP in the presence of a proton or sodium gradient. F-type ATPases consist of two structural domains, F(1) containing the extramembraneous catalytic core and F(0) containing the membrane proton channel, linked together by a central stalk and a peripheral stalk. During catalysis, ATP synthesis in the catalytic domain of F(1) is coupled via a rotary mechanism of the central stalk subunits to proton translocation. This protein is part of the stalk that links CF(0) to CF(1). It either transmits conformational changes from CF(0) to CF(1) or is implicated in proton conduction. This is ATP synthase subunit delta from Ureaplasma parvum serovar 3 (strain ATCC 27815 / 27 / NCTC 11736).